A 112-amino-acid polypeptide reads, in one-letter code: Nitrogen regulatory protein P-II 1 (112 aa).

The residue at position 51 (Tyr-51) is an O-UMP-tyrosine.

Belongs to the P(II) protein family. Homotrimer. In terms of processing, uridylylated/deuridylylated by GlnD.

Functionally, P-II indirectly controls the transcription of the glutamine synthetase gene (GlnA). P-II prevents NR-II-catalyzed conversion of NR-I to NR-I-phosphate, the transcriptional activator of GlnA. When P-II is uridylylated to P-II-UMP, these events are reversed. When the ratio of Gln to 2-ketoglutarate decreases, P-II is uridylylated to P-II-UMP, which causes the deadenylation of glutamine synthetase by GlnE, so activating the enzyme. The chain is Nitrogen regulatory protein P-II 1 (glnB) from Escherichia coli O157:H7.